A 513-amino-acid polypeptide reads, in one-letter code: Butyrophilin subfamily 3 member A1 (513 aa).

The signal sequence occupies residues Met-1 to Ala-29. 2 Ig-like V-type domains span residues Gln-30–Val-139 and Ala-145–Ser-236. The Extracellular portion of the chain corresponds to Gln-30 to Gly-254. Intrachain disulfides connect Cys-52/Cys-126 and Cys-166/Cys-220. N-linked (GlcNAc...) asparagine glycosylation is present at Asn-115. Residues Thr-255 to Trp-271 form a helical membrane-spanning segment. Topologically, residues Gln-272–Ala-513 are cytoplasmic. Residues Arg-322 to Ala-513 enclose the B30.2/SPRY domain.

The protein belongs to the immunoglobulin superfamily. BTN/MOG family. As to quaternary structure, homodimer. N-glycosylated. As to expression, detected on T-cells, natural killer cells, dendritic cells and macrophages (at protein level). Ubiquitous. Highly expressed in heart, pancreas and lung, Moderately expressed in placenta, liver and muscle.

It localises to the cell membrane. Its function is as follows. Plays a role in T-cell activation and in the adaptive immune response. Regulates the proliferation of activated T-cells. Regulates the release of cytokines and IFNG by activated T-cells. Mediates the response of T-cells toward infected and transformed cells that are characterized by high levels of phosphorylated metabolites, such as isopentenyl pyrophosphate. This is Butyrophilin subfamily 3 member A1 (BTN3A1) from Homo sapiens (Human).